The chain runs to 680 residues: DNA-directed RNA polymerase subunit beta' (680 aa).

Residues Cys-69, Cys-71, Cys-87, and Cys-90 each contribute to the Zn(2+) site. Mg(2+) is bound by residues Asp-489, Asp-491, and Asp-493.

Belongs to the RNA polymerase beta' chain family. RpoC1 subfamily. In terms of assembly, in plastids the minimal PEP RNA polymerase catalytic core is composed of four subunits: alpha, beta, beta', and beta''. When a (nuclear-encoded) sigma factor is associated with the core the holoenzyme is formed, which can initiate transcription. Mg(2+) is required as a cofactor. Requires Zn(2+) as cofactor.

Its subcellular location is the plastid. It localises to the chloroplast. The enzyme catalyses RNA(n) + a ribonucleoside 5'-triphosphate = RNA(n+1) + diphosphate. DNA-dependent RNA polymerase catalyzes the transcription of DNA into RNA using the four ribonucleoside triphosphates as substrates. This Amborella trichopoda protein is DNA-directed RNA polymerase subunit beta'.